Here is a 433-residue protein sequence, read N- to C-terminus: 3-phosphoshikimate 1-carboxyvinyltransferase (433 aa).

Positions 21, 22, and 26 each coordinate 3-phosphoshikimate. Residue lysine 21 participates in phosphoenolpyruvate binding. Residues glycine 92 and arginine 120 each contribute to the phosphoenolpyruvate site. Residues serine 166, glutamine 168, aspartate 317, and lysine 344 each coordinate 3-phosphoshikimate. Glutamine 168 lines the phosphoenolpyruvate pocket. Aspartate 317 serves as the catalytic Proton acceptor. The phosphoenolpyruvate site is built by arginine 348 and arginine 391.

The protein belongs to the EPSP synthase family. In terms of assembly, monomer.

The protein resides in the cytoplasm. The enzyme catalyses 3-phosphoshikimate + phosphoenolpyruvate = 5-O-(1-carboxyvinyl)-3-phosphoshikimate + phosphate. It functions in the pathway metabolic intermediate biosynthesis; chorismate biosynthesis; chorismate from D-erythrose 4-phosphate and phosphoenolpyruvate: step 6/7. In terms of biological role, catalyzes the transfer of the enolpyruvyl moiety of phosphoenolpyruvate (PEP) to the 5-hydroxyl of shikimate-3-phosphate (S3P) to produce enolpyruvyl shikimate-3-phosphate and inorganic phosphate. The protein is 3-phosphoshikimate 1-carboxyvinyltransferase of Caldicellulosiruptor bescii (strain ATCC BAA-1888 / DSM 6725 / KCTC 15123 / Z-1320) (Anaerocellum thermophilum).